A 367-amino-acid chain; its full sequence is Putative C-&gt;U-editing enzyme APOBEC-4 (367 aa).

Residues 61–177 (PQTKHLTFYE…AWNREALRSL (117 aa)) enclose the CMP/dCMP-type deaminase domain. His93 provides a ligand contact to Zn(2+). Residue Glu95 is the Proton donor of the active site. Cys127 and Cys134 together coordinate Zn(2+).

This sequence belongs to the cytidine and deoxycytidylate deaminase family. Zn(2+) is required as a cofactor. As to expression, predominantly expressed in testis.

In terms of biological role, putative C to U editing enzyme whose physiological substrate is not yet known. The chain is Putative C-&gt;U-editing enzyme APOBEC-4 (APOBEC4) from Homo sapiens (Human).